The sequence spans 323 residues: Oligodendrocyte transcription factor 2 (323 aa).

Composition is skewed to polar residues over residues 1–13 (MDSD…SRPS) and 27–45 (KGSS…STPS). Residues 1–107 (MDSDASLVSS…KKQMTEPELQ (107 aa)) are disordered. Residues 76-93 (KSSSSSTSSSTSSAAASS) show a composition bias toward low complexity. The 55-residue stretch at 108–162 (QLRLKINSRERKRMHDLNIAMDGLREVMPYAHGPSVRKLSKIATLLLARNYILML) folds into the bHLH domain.

In terms of assembly, interacts with NKX2-2. Interacts with ZNF488. Expressed in the brain, in oligodendrocytes. Strongly expressed in oligodendrogliomas, while expression is weak to moderate in astrocytomas. Expression in glioblastomas highly variable.

The protein resides in the nucleus. It localises to the cytoplasm. Its function is as follows. Required for oligodendrocyte and motor neuron specification in the spinal cord, as well as for the development of somatic motor neurons in the hindbrain. Functions together with ZNF488 to promote oligodendrocyte differentiation. Cooperates with OLIG1 to establish the pMN domain of the embryonic neural tube. Antagonist of V2 interneuron and of NKX2-2-induced V3 interneuron development. The polypeptide is Oligodendrocyte transcription factor 2 (OLIG2) (Homo sapiens (Human)).